The sequence spans 253 residues: 28 kDa inner dynein arm light chain, axonemal (253 aa).

The segment at 19–44 (TSKDKGKGAKGTPGKKGALPPVEQKP) is disordered. A coiled-coil region spans residues 160–239 (IRKALQTEQG…LKQQLETFLV (80 aa)).

This sequence belongs to the inner dynein arm light chain family.

It localises to the cytoplasm. It is found in the cytoskeleton. Its subcellular location is the flagellum axoneme. Its function is as follows. Plays a dynamic role in flagellar motility. May be necessary for stable assembly of a subset of inner dynein arms or for the binding of these arms to the outer doublet microtubules of the axoneme. This is 28 kDa inner dynein arm light chain, axonemal (IDA4) from Chlamydomonas reinhardtii (Chlamydomonas smithii).